Consider the following 294-residue polypeptide: tRNA dimethylallyltransferase (294 aa).

11-18 (GPTAVGKT) lines the ATP pocket. 13–18 (TAVGKT) lines the substrate pocket. Residues 36–39 (DSQQ) form an interaction with substrate tRNA region.

It belongs to the IPP transferase family. In terms of assembly, monomer. Requires Mg(2+) as cofactor.

The enzyme catalyses adenosine(37) in tRNA + dimethylallyl diphosphate = N(6)-dimethylallyladenosine(37) in tRNA + diphosphate. In terms of biological role, catalyzes the transfer of a dimethylallyl group onto the adenine at position 37 in tRNAs that read codons beginning with uridine, leading to the formation of N6-(dimethylallyl)adenosine (i(6)A). The protein is tRNA dimethylallyltransferase of Lactococcus lactis subsp. cremoris (strain MG1363).